A 323-amino-acid chain; its full sequence is Mitochondrial glutamate carrier 1 (323 aa).

3 Solcar repeats span residues 6-93 (ISLP…FRHQ), 101-214 (LTLP…LNQL), and 223-312 (SPFY…GIAE). A run of 6 helical transmembrane segments spans residues 12–32 (LING…IDLA), 62–82 (YFGM…EKAI), 107–127 (MLAG…MEML), 189–209 (GLGA…PLFA), 223–243 (SPFY…AVAV), and 292–312 (ALVI…GIAE).

This sequence belongs to the mitochondrial carrier (TC 2.A.29) family.

Its subcellular location is the mitochondrion inner membrane. The enzyme catalyses L-glutamate(in) + H(+)(in) = L-glutamate(out) + H(+)(out). Functionally, mitochondrial glutamate/H(+) symporter. Responsible for the transport of glutamate from the cytosol into the mitochondrial matrix with the concomitant import of a proton. Plays a role in the control of glucose-stimulated insulin secretion. The protein is Mitochondrial glutamate carrier 1 (Slc25a22) of Mus musculus (Mouse).